Here is a 430-residue protein sequence, read N- to C-terminus: Asparagine--tRNA ligase (430 aa).

Belongs to the class-II aminoacyl-tRNA synthetase family. Homodimer.

The protein localises to the cytoplasm. The catalysed reaction is tRNA(Asn) + L-asparagine + ATP = L-asparaginyl-tRNA(Asn) + AMP + diphosphate + H(+). This is Asparagine--tRNA ligase from Bacillus licheniformis (strain ATCC 14580 / DSM 13 / JCM 2505 / CCUG 7422 / NBRC 12200 / NCIMB 9375 / NCTC 10341 / NRRL NRS-1264 / Gibson 46).